Reading from the N-terminus, the 369-residue chain is UDP-3-O-acylglucosamine N-acyltransferase (369 aa).

Histidine 252 functions as the Proton acceptor in the catalytic mechanism. Residues 348 to 369 form a disordered region; it reads ERRQRGENNAPAQNKQDEEKSS.

The protein belongs to the transferase hexapeptide repeat family. LpxD subfamily. In terms of assembly, homotrimer.

The enzyme catalyses a UDP-3-O-[(3R)-3-hydroxyacyl]-alpha-D-glucosamine + a (3R)-hydroxyacyl-[ACP] = a UDP-2-N,3-O-bis[(3R)-3-hydroxyacyl]-alpha-D-glucosamine + holo-[ACP] + H(+). It participates in bacterial outer membrane biogenesis; LPS lipid A biosynthesis. Catalyzes the N-acylation of UDP-3-O-acylglucosamine using 3-hydroxyacyl-ACP as the acyl donor. Is involved in the biosynthesis of lipid A, a phosphorylated glycolipid that anchors the lipopolysaccharide to the outer membrane of the cell. This is UDP-3-O-acylglucosamine N-acyltransferase from Cupriavidus metallidurans (strain ATCC 43123 / DSM 2839 / NBRC 102507 / CH34) (Ralstonia metallidurans).